A 216-amino-acid polypeptide reads, in one-letter code: MLAPEARGDLIHFTENTRDAMETFFNSYDLAEYSEVNPNKLNRKETDELLGVIRERFKSELVITDEDFVKHLAFALIRAANITTSVKVNYVGAYEYTIGGKKFLVKDAWVFPLIKECMKKFNKPNPVRTFCATFEDAYIVIARSLPKLFLNRTIGKRGIPSGYEFLGADFLTATSVCLNDHEKAIVLQASRAAIDRAVSSSVDGKIVSLFDLGRLS.

The protein localises to the virion. In terms of biological role, component that constitutes the tail found at one end of the virion. Together with Hsp70h and p64, encapsidates the 5'-terminal portion of the viral genome. Movement protein that is involved in local cell-cell movement via plamodesmata. At least five viral proteins, CP, CPm, p6, p64 and Hsp70h are essential for cell-cell movement. In Beet yellows virus (isolate Ukraine) (BYV), this protein is Minor capsid protein.